The chain runs to 338 residues: Transcription factor GRA2 (338 aa).

2 disordered regions span residues 171–230 and 256–277; these read CQDS…PHYA and TQHE…DGGS. Residues 174–203 are compositionally biased toward polar residues; that stretch reads SGVSQPSNLADDTLGQGQPVSTVVQPQHPG. A basic motif region spans residues 223-236; it reads KRQRPHYAIEKRYR. The region spanning 223 to 303 is the bHLH domain; that stretch reads KRQRPHYAIE…NQATLCIRQL (81 aa). The interval 237–303 is helix-loop-helix motif; sequence AGLQERFEAL…NQATLCIRQL (67 aa).

It localises to the nucleus. In terms of biological role, transcription factor that specifically regulates the expression of the gene cluster that mediates the biosynthesis of gramillins A and B, bicyclic lipopeptides that induce cell death in maize leaves but not in wheat leaves. The polypeptide is Transcription factor GRA2 (GRA2) (Gibberella zeae (strain ATCC MYA-4620 / CBS 123657 / FGSC 9075 / NRRL 31084 / PH-1) (Wheat head blight fungus)).